The sequence spans 775 residues: Ubiquitin carboxyl-terminal hydrolase 14 (775 aa).

A UBP-type 1; degenerate zinc finger spans residues 1-108 (MSCPHLTETN…EDLYDYFYVP (108 aa)). Zn(2+)-binding residues include C25, C28, C41, C44, C49, H56, H60, H66, C153, H155, C174, C177, C186, C189, C194, H207, H211, H217, C236, and C239. The UBP-type 2 zinc finger occupies 151–259 (TTCDHIINLP…THMLNFGIDI (109 aa)). The USP domain occupies 300 to 774 (TGLKNLGNSC…TGYVYLFERL (475 aa)). The active-site Nucleophile is C309. S456 is subject to Phosphoserine. UBA domains lie at 576 to 617 (EWNQ…LFEH) and 639 to 679 (SVSE…ILNH). H730 (proton acceptor) is an active-site residue.

It belongs to the peptidase C19 family.

The enzyme catalyses Thiol-dependent hydrolysis of ester, thioester, amide, peptide and isopeptide bonds formed by the C-terminal Gly of ubiquitin (a 76-residue protein attached to proteins as an intracellular targeting signal).. This chain is Ubiquitin carboxyl-terminal hydrolase 14 (ubp14), found in Schizosaccharomyces pombe (strain 972 / ATCC 24843) (Fission yeast).